A 320-amino-acid polypeptide reads, in one-letter code: Probable L-ascorbate peroxidase 5, chloroplastic (320 aa).

The transit peptide at 1–42 directs the protein to the chloroplast; it reads MAVVHRILRRGLSAASPLPSLRGLLLVSPQELGRRPASSSSS. H80 acts as the Proton acceptor in catalysis. Position 209 (H209) interacts with heme b. K(+) is bound at residue T210. The disordered stretch occupies residues 213–241; the sequence is RARPERSGWGKPETKYTENGPGAPGGQSW. Over residues 214 to 228 the composition is skewed to basic and acidic residues; that stretch reads ARPERSGWGKPETKY. T242 and D249 together coordinate K(+).

It belongs to the peroxidase family. Ascorbate peroxidase subfamily. It depends on heme b as a cofactor. In terms of tissue distribution, expressed in leaves, stems and flowers.

The protein localises to the plastid. It localises to the chloroplast stroma. It catalyses the reaction L-ascorbate + H2O2 = L-dehydroascorbate + 2 H2O. Functionally, plays a key role in hydrogen peroxide removal. The polypeptide is Probable L-ascorbate peroxidase 5, chloroplastic (Oryza sativa subsp. japonica (Rice)).